Consider the following 469-residue polypeptide: MTTSSNLISSDIEEYLKVHENKDMLRVLTCGSVDDGKSTLIGRLLFDSKMIFEDQMAAIEKDSKRFNTTDDSFDLALLVDGLQSEREQGITIDVAYRYFTTEQRKFIIADTPGHEQYTRNMATGASTCDLAIILIDARHGVQVQTRRHSFICSQLGIKHVIIAINKMDAIDYDQATYQKIKKEYREFAEDLSFSDVRFVPISALKGDNVVNESPNMTWYPGSTLLKLLNTVSVEQDRSESFRFQVQYVNRPNLDFRGFCGTIGSGEIRVGDTVATLPSNKESRVKSIVTFDGELEKAVAGQAVTLTLEDEIDISRGDMLVRPHDKPFSVSHFEADVVWMTEEPLCVDREYAIKVGSKSVYGYADAINHKVDVNTLEKQSAQQLALNEIGNCHFAVTEPVQFDAYDTNRSTGSFIIIDRLTNVTVGAGMIRNPIEVKSTKAHEYSEFEIEMNALVRKHFPHWGAKDISKG.

The region spanning 22–236 (KDMLRVLTCG…LLNTVSVEQD (215 aa)) is the tr-type G domain. The G1 stretch occupies residues 31–38 (GSVDDGKS). GTP is bound at residue 31–38 (GSVDDGKS). Residues 89–93 (GITID) form a G2 region. Positions 110–113 (DTPG) are G3. GTP is bound by residues 110-114 (DTPGH) and 165-168 (NKMD). A G4 region spans residues 165–168 (NKMD). Residues 202–204 (SAL) form a G5 region.

It belongs to the TRAFAC class translation factor GTPase superfamily. Classic translation factor GTPase family. CysN/NodQ subfamily. As to quaternary structure, heterodimer composed of CysD, the smaller subunit, and CysN.

It catalyses the reaction sulfate + ATP + H(+) = adenosine 5'-phosphosulfate + diphosphate. It functions in the pathway sulfur metabolism; hydrogen sulfide biosynthesis; sulfite from sulfate: step 1/3. Functionally, with CysD forms the ATP sulfurylase (ATPS) that catalyzes the adenylation of sulfate producing adenosine 5'-phosphosulfate (APS) and diphosphate, the first enzymatic step in sulfur assimilation pathway. APS synthesis involves the formation of a high-energy phosphoric-sulfuric acid anhydride bond driven by GTP hydrolysis by CysN coupled to ATP hydrolysis by CysD. This chain is Sulfate adenylyltransferase subunit 1, found in Shewanella woodyi (strain ATCC 51908 / MS32).